The following is a 98-amino-acid chain: MMKLVLFGIIVILFSMIGSIHGSDPPGNYPLNTYGNKYACTILGENDFCQKICKVHGVQYGYCFNSRCWCEYLEEKDVNIWDAVKRHCKNTILYPKGK.

Residues Met-1–Gly-22 form the signal peptide. Residues Pro-26–Lys-89 enclose the LCN-type CS-alpha/beta domain. 3 disulfide bridges follow: Cys-40/Cys-63, Cys-49/Cys-68, and Cys-53/Cys-70. Position 96 is a lysine amide (Lys-96).

Belongs to the long (3 C-C) scorpion toxin superfamily. Monomer (edited version) and heterodimer (non-edited version) of this alpha chain and a beta chain (AC B8XGZ8). As to expression, expressed by the venom gland.

The protein localises to the secreted. The heterodimer non-edited LVP1 induces lipolysis in rat adipocytes. Induction of lipolysis by LVP1 appears to be mediated through the beta-2 adrenergic receptor pathway (ADRB2). In terms of biological role, the edited BmKBTx-like, similar to beta-toxins, may modulate voltage-gated sodium channels (Nav) and may block voltage-gated potassium channels (Kv). In Buthus israelis (Israeli scorpion), this protein is Lipolysis-activating peptide 1-alpha chain.